Here is a 149-residue protein sequence, read N- to C-terminus: Protein SprT-like (149 aa).

Positions 4–144 constitute a SprT-like domain; that stretch reads TDYVKQVSLE…GLCRGKLLLV (141 aa). His-64 is a Zn(2+) binding site. Residue Glu-65 is part of the active site. A Zn(2+)-binding site is contributed by His-68.

It belongs to the SprT family. Zn(2+) serves as cofactor.

It localises to the cytoplasm. This Streptococcus pneumoniae serotype 4 (strain ATCC BAA-334 / TIGR4) protein is Protein SprT-like.